A 351-amino-acid polypeptide reads, in one-letter code: uncharacterized protein (351 aa).

Positions 215, 226, 290, 319, and 333 each coordinate Mn(2+).

The protein belongs to the peptidase M24B family. The cofactor is Mn(2+).

This is an uncharacterized protein from Staphylococcus aureus (strain MRSA252).